The chain runs to 601 residues: Group B oligopeptidase PepB (601 aa).

His386 is a binding site for Zn(2+). The active site involves Glu387. Residues His390 and His393 each coordinate Zn(2+).

The protein belongs to the peptidase M3B family. Requires Zn(2+) as cofactor.

It localises to the cytoplasm. Has oligopeptidase activity and degrades a variety of small bioactive peptides, including bradykinin, neurotensin, and peptide fragments of substance P and adrenocorticotropin. Also hydrolyzes the synthetic collagen-like substrate N-(3-[2-furyl]acryloyl)-Leu-Gly-Pro-Ala (FALGPA). This is Group B oligopeptidase PepB (pepB) from Streptococcus agalactiae serotype III (strain NEM316).